Here is a 463-residue protein sequence, read N- to C-terminus: Glutamate--tRNA ligase 1 (463 aa).

Positions 10–20 (PSPTGYLHIGG) match the 'HIGH' region motif. A 'KMSKS' region motif is present at residues 238–242 (KLSKR). Lys-241 is a binding site for ATP.

It belongs to the class-I aminoacyl-tRNA synthetase family. Glutamate--tRNA ligase type 1 subfamily. As to quaternary structure, monomer.

Its subcellular location is the cytoplasm. The catalysed reaction is tRNA(Glu) + L-glutamate + ATP = L-glutamyl-tRNA(Glu) + AMP + diphosphate. Functionally, catalyzes the attachment of glutamate to tRNA(Glu) in a two-step reaction: glutamate is first activated by ATP to form Glu-AMP and then transferred to the acceptor end of tRNA(Glu). The sequence is that of Glutamate--tRNA ligase 1 from Helicobacter pylori (strain P12).